The sequence spans 143 residues: uncharacterized protein (143 aa).

Residues 4-24 (FGIVALSIICSIAFLFVAYGV) traverse the membrane as a helical segment. The segment at 97-143 (TVPFVNTEAPPPRLSSSFSRQSGENAETQSQVSASPFNDKNSPYVQE) is disordered. Polar residues predominate over residues 110–143 (LSSSFSRQSGENAETQSQVSASPFNDKNSPYVQE).

Its subcellular location is the golgi apparatus membrane. This is an uncharacterized protein from Schizosaccharomyces pombe (strain 972 / ATCC 24843) (Fission yeast).